We begin with the raw amino-acid sequence, 271 residues long: Thiosulfate sulfurtransferase (271 aa).

Rhodanese domains lie at 21–129 (SAPE…PLSR) and 159–270 (GAAD…TPVE). Cys-230 acts as the Cysteine persulfide intermediate in catalysis. Arg-235 is a substrate binding site.

It is found in the cytoplasm. The catalysed reaction is thiosulfate + hydrogen cyanide = thiocyanate + sulfite + 2 H(+). This is Thiosulfate sulfurtransferase (rhdA) from Azotobacter vinelandii.